The chain runs to 266 residues: Protein PYRICULARIA ORYZAE RESISTANCE 21 (266 aa).

Residues 1–68 (MGILVILVDL…IWCKAGKIIK (68 aa)) enclose the HMA domain. Positions 12 and 15 each coordinate a metal cation. Positions 129–156 (CEKPKPCEKPPPCKPEEPPKPPPEKPPP) are disordered. A compositionally biased stretch (basic and acidic residues) spans 142-156 (KPEEPPKPPPEKPPP).

In terms of biological role, involved in defense responses. Contributes to slowing defense responses toward Magnaporthe oryzae. This is Protein PYRICULARIA ORYZAE RESISTANCE 21 from Oryza sativa subsp. japonica (Rice).